The primary structure comprises 711 residues: Methionine--tRNA ligase (711 aa).

Positions 15–25 (PYTNGPIHIGH) match the 'HIGH' region motif. 4 residues coordinate Zn(2+): cysteine 147, cysteine 150, cysteine 160, and cysteine 163. Positions 336–340 (KLSTS) match the 'KMSKS' region motif. Threonine 339 serves as a coordination point for ATP. The tRNA-binding domain maps to 610–711 (DFAKMDIRIG…ADAPNGATVN (102 aa)).

This sequence belongs to the class-I aminoacyl-tRNA synthetase family. MetG type 1 subfamily. As to quaternary structure, homodimer. It depends on Zn(2+) as a cofactor.

The protein resides in the cytoplasm. It catalyses the reaction tRNA(Met) + L-methionine + ATP = L-methionyl-tRNA(Met) + AMP + diphosphate. Is required not only for elongation of protein synthesis but also for the initiation of all mRNA translation through initiator tRNA(fMet) aminoacylation. The polypeptide is Methionine--tRNA ligase (Flavobacterium johnsoniae (strain ATCC 17061 / DSM 2064 / JCM 8514 / BCRC 14874 / CCUG 350202 / NBRC 14942 / NCIMB 11054 / UW101) (Cytophaga johnsonae)).